Consider the following 258-residue polypeptide: Regulatory protein RecX (258 aa).

This sequence belongs to the RecX family.

It is found in the cytoplasm. Functionally, modulates RecA activity. This is Regulatory protein RecX from Streptococcus thermophilus (strain ATCC BAA-491 / LMD-9).